Consider the following 78-residue polypeptide: DNA-directed RNA polymerase subunit omega (78 aa).

It belongs to the RNA polymerase subunit omega family. As to quaternary structure, in cyanobacteria the RNAP catalytic core is composed of 2 alpha, 1 beta, 1 beta', 1 gamma and 1 omega subunit. When a sigma factor is associated with the core the holoenzyme is formed, which can initiate transcription.

It carries out the reaction RNA(n) + a ribonucleoside 5'-triphosphate = RNA(n+1) + diphosphate. In terms of biological role, promotes RNA polymerase assembly. Latches the N- and C-terminal regions of the beta' subunit thereby facilitating its interaction with the beta and alpha subunits. This is DNA-directed RNA polymerase subunit omega from Prochlorococcus marinus (strain AS9601).